Reading from the N-terminus, the 210-residue chain is Chaperone protein TorD (210 aa).

The protein belongs to the TorD/DmsD family. TorD subfamily.

Its subcellular location is the cytoplasm. In terms of biological role, involved in the biogenesis of TorA. Acts on TorA before the insertion of the molybdenum cofactor and, as a result, probably favors a conformation of the apoenzyme that is competent for acquiring the cofactor. This Salmonella newport (strain SL254) protein is Chaperone protein TorD.